We begin with the raw amino-acid sequence, 447 residues long: Adenylosuccinate synthetase (447 aa).

GTP-binding positions include 12–18 and 40–42; these read GDEGKGK and GHT. Aspartate 13 acts as the Proton acceptor in catalysis. The Mg(2+) site is built by aspartate 13 and glycine 40. Residues 13–16, 38–41, threonine 128, arginine 142, glutamine 223, threonine 238, and arginine 302 contribute to the IMP site; these read DEGK and NAGH. The active-site Proton donor is the histidine 41. A substrate-binding site is contributed by 298-304; that stretch reads TTTGRKR. GTP is bound by residues arginine 304, 330-332, and 412-414; these read KLD and SLG.

This sequence belongs to the adenylosuccinate synthetase family. Homodimer. The cofactor is Mg(2+).

The protein resides in the cytoplasm. The enzyme catalyses IMP + L-aspartate + GTP = N(6)-(1,2-dicarboxyethyl)-AMP + GDP + phosphate + 2 H(+). It functions in the pathway purine metabolism; AMP biosynthesis via de novo pathway; AMP from IMP: step 1/2. Functionally, plays an important role in the de novo pathway of purine nucleotide biosynthesis. Catalyzes the first committed step in the biosynthesis of AMP from IMP. This chain is Adenylosuccinate synthetase, found in Nostoc punctiforme (strain ATCC 29133 / PCC 73102).